The chain runs to 430 residues: Levansucrase Lscgamma (430 aa).

5 residues coordinate sucrose: Trp-60, Asp-61, Ala-147, Arg-217, and Asp-218. Catalysis depends on Asp-61, which acts as the Nucleophile. The active-site Proton donor/acceptor is the Glu-302.

It belongs to the glycosyl hydrolase 68 family. As to quaternary structure, homodimer.

The catalysed reaction is [6)-beta-D-fructofuranosyl-(2-&gt;](n) alpha-D-glucopyranoside + sucrose = [6)-beta-D-fructofuranosyl-(2-&gt;](n+1) alpha-D-glucopyranoside + D-glucose. Its activity is regulated as follows. Sucrose hydrolase activity is negatively affected by salt concentration. The levan polymerization rate increases sharply in relation to sucrose concentration reaching the maximum at 100 mM sucrose, and then steadily decreases, suggesting a strong inhibition of the activity by the substrate. Its function is as follows. Catalyzes the synthesis of levan, a fructose polymer, by transferring the fructosyl moiety from sucrose to a growing acceptor molecule. Also displays sucrose hydrolase activity. Can depolymerize the levan produced once substrate is completely exhausted. This Pseudomonas syringae pv. actinidiae protein is Levansucrase Lscgamma.